The primary structure comprises 343 residues: N-acetyl-gamma-glutamyl-phosphate reductase (343 aa).

Cys-149 is an active-site residue.

The protein belongs to the NAGSA dehydrogenase family. Type 1 subfamily.

The protein localises to the cytoplasm. The enzyme catalyses N-acetyl-L-glutamate 5-semialdehyde + phosphate + NADP(+) = N-acetyl-L-glutamyl 5-phosphate + NADPH + H(+). It functions in the pathway amino-acid biosynthesis; L-arginine biosynthesis; N(2)-acetyl-L-ornithine from L-glutamate: step 3/4. Its function is as follows. Catalyzes the NADPH-dependent reduction of N-acetyl-5-glutamyl phosphate to yield N-acetyl-L-glutamate 5-semialdehyde. The chain is N-acetyl-gamma-glutamyl-phosphate reductase from Methanococcus maripaludis (strain C7 / ATCC BAA-1331).